We begin with the raw amino-acid sequence, 152 residues long: D-aminoacyl-tRNA deacylase (152 aa).

The Gly-cisPro motif, important for rejection of L-amino acids motif lies at G142–P143.

This sequence belongs to the DTD family. In terms of assembly, homodimer.

It is found in the cytoplasm. It catalyses the reaction glycyl-tRNA(Ala) + H2O = tRNA(Ala) + glycine + H(+). The enzyme catalyses a D-aminoacyl-tRNA + H2O = a tRNA + a D-alpha-amino acid + H(+). In terms of biological role, an aminoacyl-tRNA editing enzyme that deacylates mischarged D-aminoacyl-tRNAs. Also deacylates mischarged glycyl-tRNA(Ala), protecting cells against glycine mischarging by AlaRS. Acts via tRNA-based rather than protein-based catalysis; rejects L-amino acids rather than detecting D-amino acids in the active site. By recycling D-aminoacyl-tRNA to D-amino acids and free tRNA molecules, this enzyme counteracts the toxicity associated with the formation of D-aminoacyl-tRNA entities in vivo and helps enforce protein L-homochirality. This is D-aminoacyl-tRNA deacylase from Burkholderia cenocepacia (strain HI2424).